A 463-amino-acid chain; its full sequence is Probable Xaa-Pro aminopeptidase PEPP (463 aa).

The Mn(2+) site is built by Asp259, Asp270, Glu393, and Glu433.

This sequence belongs to the peptidase M24B family. Mn(2+) serves as cofactor.

It catalyses the reaction Release of any N-terminal amino acid, including proline, that is linked to proline, even from a dipeptide or tripeptide.. Catalyzes the removal of a penultimate prolyl residue from the N-termini of peptides. The sequence is that of Probable Xaa-Pro aminopeptidase PEPP (PEPP) from Phaeosphaeria nodorum (strain SN15 / ATCC MYA-4574 / FGSC 10173) (Glume blotch fungus).